Reading from the N-terminus, the 251-residue chain is Hydroxyacylglutathione hydrolase (251 aa).

Zn(2+) is bound by residues His53, His55, Asp57, His58, His110, Asp127, and His165.

Belongs to the metallo-beta-lactamase superfamily. Glyoxalase II family. In terms of assembly, monomer. Zn(2+) serves as cofactor.

It catalyses the reaction an S-(2-hydroxyacyl)glutathione + H2O = a 2-hydroxy carboxylate + glutathione + H(+). Its pathway is secondary metabolite metabolism; methylglyoxal degradation; (R)-lactate from methylglyoxal: step 2/2. Its function is as follows. Thiolesterase that catalyzes the hydrolysis of S-D-lactoyl-glutathione to form glutathione and D-lactic acid. In Escherichia fergusonii (strain ATCC 35469 / DSM 13698 / CCUG 18766 / IAM 14443 / JCM 21226 / LMG 7866 / NBRC 102419 / NCTC 12128 / CDC 0568-73), this protein is Hydroxyacylglutathione hydrolase.